Reading from the N-terminus, the 2871-residue chain is Desmoplakin (2871 aa).

The segment at 1–584 (MSCNGGSHPR…DYMKTIADLE (584 aa)) is interaction with PKP1, JUP, PKP2. Positions 1–1056 (MSCNGGSHPR…ANSENCNKNK (1056 aa)) are globular 1. Ser22 and Ser53 each carry phosphoserine. Tyr56 carries the phosphotyrosine modification. Thr61 bears the Phosphothreonine mark. Phosphoserine is present on residues Ser165, Ser166, and Ser176. Spectrin repeat units follow at residues 178-271 (SGWD…HLRQ) and 272-375 (LQNI…LKEN). The Spectrin 3a repeat unit spans residues 376–446 (AAYFQFFEEA…NLVNKSKKIV (71 aa)). Residues 458–515 (NKPIILRALCDYKQDQKIVHKGDECILKDNNERSKWYVTGPGGVDMLVPSVGLIIPPP) enclose the SH3 domain. One copy of the Spectrin 3b repeat lies at 516–545 (NPLAVDLSCKIEQYYEAILALWNQLYINMK). Spectrin repeat units follow at residues 546 to 627 (SLVS…IQLP), 654 to 769 (VIET…SLCT), and 770 to 883 (VRAL…DLEK). A coiled-coil region spans residues 1018-1945 (SEMLKSLEDL…QREIDKLRQR (928 aa)). The segment at 1057 to 1945 (FLDQNLQKYQ…QREIDKLRQR (889 aa)) is central fibrous rod domain. A phosphoserine mark is found at Ser1658, Ser1708, and Ser2024. Positions 1946 to 2871 (PYGSHRETQT…YSFSSSSIGH (926 aa)) are globular 2. Residues 1960-2208 (TVDTSKLVFD…LLLSVQKRSM (249 aa)) form a 4.5 X 38 AA tandem repeats (Domain A) region. Plectin repeat units lie at residues 2009-2045 (QPFL…PEST), 2046-2083 (VMLL…FDDR), 2084-2121 (QQIY…RETG), 2122-2159 (MRLL…RDLY), 2163-2197 (NDPR…PHTG), 2198-2233 (LLLL…PSTV), 2251-2288 (KDFL…PGTA), 2289-2326 (LELL…IEFK), 2327-2364 (EKLL…KGHG), 2365-2402 (IRLL…EELS), 2406-2440 (SDPS…EETG), 2456-2493 (SQKN…YETF), 2507-2544 (TITG…RKFF), 2610-2647 (SDTL…SITG), 2648-2685 (QRLL…QDMA), 2724-2761 (QRFL…GRAA), and 2762-2799 (QRLQ…DITG). Phosphoserine occurs at positions 2207, 2209, and 2225. Residues 2244 to 2446 (DEVGERIKDF…EETGLCLLPL (203 aa)) form a 4.5 X 38 AA tandem repeats (Domain B) region. Residues 2609-2822 (FSDTLEESSP…LPSPYNMSSA (214 aa)) form a 4.5 X 38 AA tandem repeats (Domain C) region. Phosphoserine occurs at positions 2810 and 2815. The segment covering 2810 to 2823 (SKGLPSPYNMSSAP) has biased composition (polar residues). The tract at residues 2810–2871 (SKGLPSPYNM…YSFSSSSIGH (62 aa)) is disordered. Tyr2817 is subject to Phosphotyrosine. Phosphoserine is present on residues Ser2820, Ser2821, and Ser2825. A 6 X 4 AA tandem repeats of G-S-R-[SR] region spans residues 2824–2847 (GSRSGSRSGSRSGSRSGSRSGSRR). A compositionally biased stretch (low complexity) spans 2824–2847 (GSRSGSRSGSRSGSRSGSRSGSRR). 2 positions are modified to omega-N-methylarginine: Arg2826 and Arg2847. A Phosphoserine modification is found at Ser2849. Thr2853 is modified (phosphothreonine). Over residues 2856 to 2871 (SSYSYSYSFSSSSIGH) the composition is skewed to low complexity. Ser2868 is subject to Phosphoserine.

Belongs to the plakin or cytolinker family. Homodimer. Interacts with COL17A1 (via cytoplasmic region). Interacts with DSC2. Interacts with PKP2. Interacts with PKP1. Interacts weakly with TMEM65. Post-translationally, phosphorylation at Ser-2849 increases association with intermediate filament cytokeratin, potentially facilitating interaction between desmosome junctions and intermediate filament architecture. As to expression, expressed in oral mucosa (at protein level). Expressed in arrector pili muscle (at protein level). Expressed in the heart in the heart (at protein level). In terms of tissue distribution, apparently an obligate constituent of all desmosomes. Resides predominantly in tissues and cells of stratified origin.

It is found in the cell junction. Its subcellular location is the desmosome. It localises to the cell membrane. The protein resides in the cytoplasm. Major high molecular weight protein of desmosomes. Regulates profibrotic gene expression in cardiomyocytes via activation of the MAPK14/p38 MAPK signaling cascade and increase in TGFB1 protein abundance. In Homo sapiens (Human), this protein is Desmoplakin (DSP).